The sequence spans 315 residues: Transcription factor MafAa (315 aa).

Over residues 52–104 the composition is skewed to low complexity; the sequence is STPISTPCSSVPSSPSFCAPSPGSQPGQNLVNGVNNNNNNSGNGNNNTQGSSG. 2 disordered regions span residues 52 to 108 and 169 to 191; these read STPI…KPQM and ATNGHHHPVHHHHHHHGHHAHAR. Residues 172–189 are compositionally biased toward basic residues; that stretch reads GHHHPVHHHHHHHGHHAH. The interval 223–248 is basic motif; that stretch reads RLKQKRRTLKNRGYAQSCRYKRVQQR. The bZIP domain occupies 223 to 286; sequence RLKQKRRTLK…DLYKEKYEKL (64 aa). Residues 229–243 form an interaction with DNA region; the sequence is RTLKNRGYAQSCRYK. A leucine-zipper region spans residues 251–272; that stretch reads LESEKCTLQSQVEQLKQDVARL. The segment at 290-315 is disordered; sequence AFNGGGNTRDPSSGNHVKTTSTDFFM. A compositionally biased stretch (polar residues) spans 298-315; that stretch reads RDPSSGNHVKTTSTDFFM.

This sequence belongs to the bZIP family. Maf subfamily.

The protein resides in the nucleus. Functionally, transcription factor, possibly involved in transcription regulation during lens development, including that of crystallin genes. Specifically binds to the alphaCE2 enhancer element of crystallin gene. The protein is Transcription factor MafAa (mafaa) of Danio rerio (Zebrafish).